Here is a 662-residue protein sequence, read N- to C-terminus: Polyunsaturated fatty acid lipoxygenase ALOX15 (662 aa).

The 113-residue stretch at 2-114 (GLYRIRVSTG…VLSLPEGTGR (113 aa)) folds into the PLAT domain. Residues 115-662 (TVGEDPQGLF…PSVVENSVAI (548 aa)) enclose the Lipoxygenase domain. 5 residues coordinate Fe cation: His360, His365, His540, His544, and Ile662.

The protein belongs to the lipoxygenase family. As to quaternary structure, interacts with PEBP1; in response to IL13/interleukin-13, prevents the interaction of PEBP1 with RAF1 to activate the ERK signaling cascade. It depends on Fe cation as a cofactor. Detected in monocytes and eosinophils (at protein level). Expressed in airway epithelial cells.

The protein resides in the cytoplasm. It localises to the cytosol. The protein localises to the cell membrane. It is found in the lipid droplet. The catalysed reaction is (5Z,8Z,11Z,14Z)-eicosatetraenoate + O2 = (12S)-hydroperoxy-(5Z,8Z,10E,14Z)-eicosatetraenoate. It catalyses the reaction (5Z,8Z,11Z,14Z)-eicosatetraenoate + O2 = (15S)-hydroperoxy-(5Z,8Z,11Z,13E)-eicosatetraenoate. It carries out the reaction (9Z,12Z)-octadecadienoate + O2 = (13S)-hydroperoxy-(9Z,11E)-octadecadienoate. The enzyme catalyses (5Z,8Z,11Z,14Z)-eicosatetraenoate + 2 O2 = (14R,15S)-dihydroperoxy-(5Z,8Z,10E,12E)-eicosatetraenoate. The catalysed reaction is (5Z,8Z,11Z,14Z)-eicosatetraenoate + 2 O2 = (8S,15S)-dihydroperoxy-(5Z,9E,11Z,13E)-eicosatetraenoate. It catalyses the reaction (14S,15R)-epoxy-(5Z,8Z,11Z)-eicosatrienoate + O2 = (8S)-hydroperoxy-(14S,15R)-epoxy-(5Z,9E,11Z)-eicosatrienoate. It carries out the reaction (14S,15R)-epoxy-(5Z,8Z,11Z)-eicosatrienoate + O2 = (12S)-hydroperoxy-(14S,15R)-epoxy-(5Z,8Z,10E)-eicosatrienoate. The enzyme catalyses (14R,15S)-epoxy-(5Z,8Z,11Z)-eicosatrienoate + O2 = (5S)-hydroperoxy-(14R,15S)-epoxy-(6E,8Z,11Z)-eicosatrienoate. The catalysed reaction is (14R,15S)-epoxy-(5Z,8Z,11Z)-eicosatrienoate + O2 = (12S)-hydroperoxy-(14R,15S)-epoxy-(5Z,8Z,10E)-eicosatrienoate. It catalyses the reaction (15R)-hydroperoxy-(5Z,8Z,11Z,13E)-eicosatetraenoate = 15-oxo-(5Z,8Z,11Z,13E)-eicosatetraenoate + H2O. It carries out the reaction (15S)-hydroperoxy-(5Z,8Z,11Z,13E)-eicosatetraenoate = (14S,15S)-epoxy-(5Z,8Z,10E,12E)-eicosatetraenoate + H2O. The enzyme catalyses (12S)-hydroperoxy-(5Z,8Z,10E,14Z)-eicosatetraenoate = (8S)-hydroxy-(11S,12S)-epoxy-(5Z,9E,14Z)-eicosatrienoate. The catalysed reaction is (4Z,7Z,10Z,13Z,16Z,19Z)-docosahexaenoate + O2 = (14S)-hydroperoxy-(4Z,7Z,10Z,12E,16Z,19Z)-docosahexaenoate. It catalyses the reaction (4Z,7Z,10Z,13Z,16Z,19Z)-docosahexaenoate + O2 = (17S)-hydroperoxy-(4Z,7Z,10Z,13Z,15E,19Z)-docosahexaenoate. It carries out the reaction (7S)-hydroperoxy-(4Z,8E,10Z,13Z,16Z,19Z)-docosahexaenoate + O2 = (7S,14S)-dihydroperoxy-(4Z,8E,10Z,12E,16Z,19Z)-docosahexaenoate. The enzyme catalyses (7S)-hydroperoxy-(4Z,8E,10Z,13Z,16Z,19Z)-docosahexaenoate + O2 = (7S,17S)-dihydroperoxy-(4Z,8E,10Z,13Z,15E,19Z)-docosahexaenoate. The catalysed reaction is (4Z,7Z,10Z,13Z,16Z,19Z)-docosahexaenoate + O2 = (11S)-hydroperoxy-(4Z,7Z,9E,13Z,16Z,19Z)-docosahexaenoate. It catalyses the reaction (7Z,10Z,13Z,16Z,19Z)-docosapentaenoate + O2 = 14-hydroperoxy-(7Z,10Z,12E,16Z,19Z)-docosapentaenoate. It carries out the reaction (4Z,7Z,10Z,13Z,16Z)-docosapentaenoate + O2 = 14-hydroperoxy-(4Z,7Z,10Z,12E,16Z)-docosapentaenoate. The enzyme catalyses N-(5Z,8Z,11Z,14Z)-eicosatetraenoyl-taurine + O2 = N-(12S)-hydroperoxy-(5Z,8Z,10E,14Z)-eicosatetraenoyl-taurine. The catalysed reaction is N-(5Z,8Z,11Z,14Z)-eicosatetraenoyl-gamma-aminobutanoate + O2 = N-(12S)-hydroperoxy-(5Z,8Z,10E,14Z)-eicosatetraenoyl-gamma-aminobutanoate. It catalyses the reaction N-(5Z,8Z,11Z,14Z)-eicosatetraenoyl-glycine + O2 = N-(12S)-hydroperoxy-(5Z,8Z,10E,14Z)-eicosatetraenoyl-glycine. It carries out the reaction N-(5Z,8Z,11Z,14Z)-eicosatetraenoyl-L-alanine + O2 = N-(12S)-hydroperoxy-(5Z,8Z,10E,14Z)-eicosatetraenoyl-alanine. The enzyme catalyses N-(5Z,8Z,11Z,14Z)-eicosatetraenoyl-taurine + O2 = N-(15S)-hydroperoxy-(5Z,8Z,11Z,13E)-eicosatetraenoyl-taurine. The catalysed reaction is N-(5Z,8Z,11Z,14Z)-eicosatetraenoyl-gamma-aminobutanoate + O2 = N-(15S)-hydroperoxy-(5Z,8Z,11Z,13E)-eicosatetraenoyl-gamma-aminobutanoate. It catalyses the reaction N-(5Z,8Z,11Z,14Z)-eicosatetraenoyl-glycine + O2 = N-(15S)-hydroperoxy-(5Z,8Z,11Z,13E)-eicosatetraenoyl-glycine. It carries out the reaction N-(5Z,8Z,11Z,14Z)-eicosatetraenoyl-L-alanine + O2 = N-(15S)-hydroperoxy-(5Z,8Z,11Z,13E)-eicosatetraenoyl-alanine. It functions in the pathway lipid metabolism; hydroperoxy eicosatetraenoic acid biosynthesis. Activity is increased by binding phosphatidylinositol phosphates, especially phosphatidylinositol 3,4-bisphosphate and phosphatidylinositol 4,5-bisphosphate. Inactivated at 37 degrees Celsius by (13S)-hydroperoxy-(9Z,11E)-octadecadienoate. Functionally, non-heme iron-containing dioxygenase that catalyzes the stereo-specific peroxidation of free and esterified polyunsaturated fatty acids generating a spectrum of bioactive lipid mediators. It inserts peroxyl groups at C12 or C15 of arachidonate ((5Z,8Z,11Z,14Z)-eicosatetraenoate) producing both 12-hydroperoxyeicosatetraenoate/12-HPETE and 15-hydroperoxyeicosatetraenoate/15-HPETE. It may then act on 12-HPETE to produce hepoxilins, which may show pro-inflammatory properties. Can also peroxidize linoleate ((9Z,12Z)-octadecadienoate) to 13-hydroperoxyoctadecadienoate/13-HPODE. May participate in the sequential oxidations of DHA ((4Z,7Z,10Z,13Z,16Z,19Z)-docosahexaenoate) to generate specialized pro-resolving mediators (SPMs)like resolvin D5 ((7S,17S)-diHPDHA) and (7S,14S)-diHPDHA, that actively down-regulate the immune response and have anti-aggregation properties with platelets. Can convert epoxy fatty acids to hydroperoxy-epoxides derivatives followed by an intramolecular nucleophilic substitution leading to the formation of monocyclic endoperoxides. Plays an important role during the maintenance of self-tolerance by peroxidizing membrane-bound phosphatidylethanolamine which can then signal the sorting process for clearance of apoptotic cells during inflammation and prevent an autoimmune response. In addition to its role in the immune and inflammatory responses, this enzyme may play a role in epithelial wound healing in the cornea through production of lipoxin A4 (LXA(4)) and docosahexaenoic acid-derived neuroprotectin D1 (NPD1; 10R,17S-HDHA), both lipid autacoids exhibit anti-inflammatory and neuroprotective properties. Furthermore, it may regulate actin polymerization which is crucial for several biological processes such as the phagocytosis of apoptotic cells. It is also implicated in the generation of endogenous ligands for peroxisome proliferator activated receptor (PPAR-gamma), hence modulating macrophage development and function. It may also exert a negative effect on skeletal development by regulating bone mass through this pathway. As well as participates in ER stress and downstream inflammation in adipocytes, pancreatic islets, and liver. Finally, it is also involved in the cellular response to IL13/interleukin-13. This Homo sapiens (Human) protein is Polyunsaturated fatty acid lipoxygenase ALOX15.